The primary structure comprises 198 residues: dITP/XTP pyrophosphatase (198 aa).

7–12 (THNPHK) is a binding site for substrate. Mg(2+) contacts are provided by glutamate 40 and aspartate 69. Residue aspartate 69 is the Proton acceptor of the active site. Residues threonine 70, 151–154 (FGYD), lysine 174, and 179–180 (HR) each bind substrate.

It belongs to the HAM1 NTPase family. In terms of assembly, homodimer. The cofactor is Mg(2+).

The catalysed reaction is XTP + H2O = XMP + diphosphate + H(+). The enzyme catalyses dITP + H2O = dIMP + diphosphate + H(+). It catalyses the reaction ITP + H2O = IMP + diphosphate + H(+). Its function is as follows. Pyrophosphatase that catalyzes the hydrolysis of nucleoside triphosphates to their monophosphate derivatives, with a high preference for the non-canonical purine nucleotides XTP (xanthosine triphosphate), dITP (deoxyinosine triphosphate) and ITP. Seems to function as a house-cleaning enzyme that removes non-canonical purine nucleotides from the nucleotide pool, thus preventing their incorporation into DNA/RNA and avoiding chromosomal lesions. This Thermoanaerobacter sp. (strain X514) protein is dITP/XTP pyrophosphatase.